The following is a 700-amino-acid chain: Elongation factor G (700 aa).

Residues Asp-10–Leu-285 form the tr-type G domain. Residues Ala-19–Thr-26, Asp-83–His-87, and Asn-137–Asp-140 contribute to the GTP site.

This sequence belongs to the TRAFAC class translation factor GTPase superfamily. Classic translation factor GTPase family. EF-G/EF-2 subfamily.

The protein localises to the cytoplasm. Its function is as follows. Catalyzes the GTP-dependent ribosomal translocation step during translation elongation. During this step, the ribosome changes from the pre-translocational (PRE) to the post-translocational (POST) state as the newly formed A-site-bound peptidyl-tRNA and P-site-bound deacylated tRNA move to the P and E sites, respectively. Catalyzes the coordinated movement of the two tRNA molecules, the mRNA and conformational changes in the ribosome. This Lacticaseibacillus casei (strain BL23) (Lactobacillus casei) protein is Elongation factor G.